Here is a 399-residue protein sequence, read N- to C-terminus: CCA-adding enzyme (399 aa).

Positions 32 and 35 each coordinate ATP. Residues G32 and R35 each coordinate CTP. Mg(2+) contacts are provided by D45 and D47. ATP is bound by residues R116, D159, R162, R165, and R168. CTP is bound by residues R116, D159, R162, R165, and R168.

Belongs to the tRNA nucleotidyltransferase/poly(A) polymerase family. Bacterial CCA-adding enzyme type 3 subfamily. In terms of assembly, homodimer. Requires Mg(2+) as cofactor.

The catalysed reaction is a tRNA precursor + 2 CTP + ATP = a tRNA with a 3' CCA end + 3 diphosphate. The enzyme catalyses a tRNA with a 3' CCA end + 2 CTP + ATP = a tRNA with a 3' CCACCA end + 3 diphosphate. Functionally, catalyzes the addition and repair of the essential 3'-terminal CCA sequence in tRNAs without using a nucleic acid template. Adds these three nucleotides in the order of C, C, and A to the tRNA nucleotide-73, using CTP and ATP as substrates and producing inorganic pyrophosphate. tRNA 3'-terminal CCA addition is required both for tRNA processing and repair. Also involved in tRNA surveillance by mediating tandem CCA addition to generate a CCACCA at the 3' terminus of unstable tRNAs. While stable tRNAs receive only 3'-terminal CCA, unstable tRNAs are marked with CCACCA and rapidly degraded. In Streptococcus gordonii (strain Challis / ATCC 35105 / BCRC 15272 / CH1 / DL1 / V288), this protein is CCA-adding enzyme.